The sequence spans 242 residues: Large ribosomal subunit protein uL3 (242 aa).

Gln151 carries the post-translational modification N5-methylglutamine.

The protein belongs to the universal ribosomal protein uL3 family. Part of the 50S ribosomal subunit. Forms a cluster with proteins L14 and L19. Post-translationally, methylated by PrmB.

Its function is as follows. One of the primary rRNA binding proteins, it binds directly near the 3'-end of the 23S rRNA, where it nucleates assembly of the 50S subunit. The polypeptide is Large ribosomal subunit protein uL3 (Zymomonas mobilis subsp. mobilis (strain ATCC 31821 / ZM4 / CP4)).